A 258-amino-acid polypeptide reads, in one-letter code: Flagellar brake protein YcgR (258 aa).

The PilZ domain occupies 131–248; sequence QKREYYRVAT…ALSLIQRYIT (118 aa).

It belongs to the YcgR family. As to quaternary structure, monomer. Interacts with the flagellar basal bodies.

The protein resides in the bacterial flagellum basal body. Acts as a flagellar brake, regulating swimming and swarming in a bis-(3'-5') cyclic diguanylic acid (c-di-GMP)-dependent manner. Binds 1 c-di-GMP dimer per subunit. Increasing levels of c-di-GMP lead to decreased motility. In Nitrosospira multiformis (strain ATCC 25196 / NCIMB 11849 / C 71), this protein is Flagellar brake protein YcgR.